We begin with the raw amino-acid sequence, 107 residues long: Small ribosomal subunit protein bS16m (107 aa).

This sequence belongs to the bacterial ribosomal protein bS16 family. As to quaternary structure, component of the mitochondrial small ribosomal subunit (mt-SSU). Mature N.crassa 74S mitochondrial ribosomes consist of a small (37S) and a large (54S) subunit. The 37S small subunit contains a 16S ribosomal RNA (16S mt-rRNA) and 32 different proteins. The 54S large subunit contains a 23S rRNA (23S mt-rRNA) and 42 different proteins.

The protein localises to the mitochondrion. Component of the mitochondrial ribosome (mitoribosome), a dedicated translation machinery responsible for the synthesis of mitochondrial genome-encoded proteins, including at least some of the essential transmembrane subunits of the mitochondrial respiratory chain. The mitoribosomes are attached to the mitochondrial inner membrane and translation products are cotranslationally integrated into the membrane. The chain is Small ribosomal subunit protein bS16m (cyt-21) from Neurospora crassa (strain ATCC 24698 / 74-OR23-1A / CBS 708.71 / DSM 1257 / FGSC 987).